Here is a 74-residue protein sequence, read N- to C-terminus: Kappa-scoloptoxin(03)-Ssm1a (74 aa).

An N-terminal signal peptide occupies residues 1-23 (MNSSIAILLVMALIMFSLDKSYS). 3 disulfide bridges follow: C32-C59, C42-C58, and C45-C68.

This sequence belongs to the scoloptoxin-03 family. As to expression, expressed by the venom gland.

Its subcellular location is the secreted. Functionally, this toxin inhibits voltage-gated potassium channel currents in DRG neurons (IC(50)=44.2 nM). In vivo, insects injected with this toxin showed signs of neurotoxicity including twitching, paralysis, and body contraction. The polypeptide is Kappa-scoloptoxin(03)-Ssm1a (Scolopendra mutilans (Chinese red-headed centipede)).